A 139-amino-acid chain; its full sequence is Putative pre-16S rRNA nuclease (139 aa).

Belongs to the YqgF nuclease family.

Its subcellular location is the cytoplasm. Its function is as follows. Could be a nuclease involved in processing of the 5'-end of pre-16S rRNA. This chain is Putative pre-16S rRNA nuclease, found in Photorhabdus laumondii subsp. laumondii (strain DSM 15139 / CIP 105565 / TT01) (Photorhabdus luminescens subsp. laumondii).